Reading from the N-terminus, the 388-residue chain is Basigin (388 aa).

A signal peptide spans 1-21; the sequence is MAAGADVPCAVLALLVLGSLA. The Extracellular portion of the chain corresponds to 27–323; that stretch reads TAGFIKSPLS…SGSATVNLRV (297 aa). Residues 43 to 131 enclose the Ig-like domain; the sequence is DSVELHCEAV…NHLSKSPKVK (89 aa). 2 disulfides stabilise this stretch: Cys49/Cys113 and Cys162/Cys211. Residues 143-218 form the Ig-like C2-type domain; the sequence is ERPVITGQYS…YECIYNTNPV (76 aa). 5 N-linked (GlcNAc...) asparagine glycosylation sites follow: Asn163, Asn222, Asn280, Asn286, and Asn307. Positions 229 to 323 constitute an Ig-like V-type domain; that stretch reads PQVVAYKKSE…SGSATVNLRV (95 aa). An intrachain disulfide couples Cys250 to Cys306. A helical transmembrane segment spans residues 324–344; the sequence is RSRLAALWPFLGIVAEVLVLV. Topologically, residues 345–388 are cytoplasmic; that stretch reads TIIFIYEKRRKPDEVLDDDDGGSAPLKSNATNHKDKNVRQRNAN. Residues 358-388 form a disordered region; sequence EVLDDDDGGSAPLKSNATNHKDKNVRQRNAN.

As to quaternary structure, interacts with NXNL1, SLC2A1 and SLC16A1. N-glycosylated. Retinal cone photoreceptors (at protein level). As to expression, brain endothelial cells, kidney epithelial cells and erythroblasts (at protein level).

The protein localises to the cell membrane. Its subcellular location is the photoreceptor inner segment. It is found in the cell projection. The protein resides in the cilium. It localises to the photoreceptor outer segment. The protein localises to the endoplasmic reticulum membrane. Its subcellular location is the basolateral cell membrane. In terms of biological role, essential for normal retinal maturation and development. Acts as a retinal cell surface receptor for NXNL1 and plays an important role in NXNL1-mediated survival of retinal cone photoreceptors. In association with glucose transporter SLC16A1/GLUT1 and NXNL1, promotes retinal cone survival by enhancing aerobic glycolysis and accelerating the entry of glucose into photoreceptors. Its function is as follows. Signaling receptor for cyclophilins, essential for PPIA/CYPA and PPIB/CYPB-dependent signaling related to chemotaxis and adhesion of immune cells. Plays an important role in targeting the monocarboxylate transporters SLC16A1/GLUT1, SLC16A3, SLC16A8, SLC16A11 and SLC16A12 to the plasma membrane. Acts as a coreceptor for vascular endothelial growth factor receptor 2 (KDR/VEGFR2) in endothelial cells enhancing its VEGFA-mediated activation and downstream signaling. Promotes angiogenesis through EPAS1/HIF2A-mediated up-regulation of VEGFA and KDR/VEGFR2 in endothelial cells. The polypeptide is Basigin (BSG) (Gallus gallus (Chicken)).